A 425-amino-acid polypeptide reads, in one-letter code: Histidine--tRNA ligase 1 (425 aa).

This sequence belongs to the class-II aminoacyl-tRNA synthetase family. As to quaternary structure, homodimer.

It localises to the cytoplasm. It catalyses the reaction tRNA(His) + L-histidine + ATP = L-histidyl-tRNA(His) + AMP + diphosphate + H(+). This Bacillus anthracis protein is Histidine--tRNA ligase 1.